The primary structure comprises 405 residues: LanC-like protein GCL2 (405 aa).

3 residues coordinate Zn(2+): Cys-278, Cys-323, and His-324.

Belongs to the LanC-like protein family.

In terms of biological role, may play a role in signaling. May be not involved in abscisic acid (ABA) signaling. The polypeptide is LanC-like protein GCL2 (GCL2) (Arabidopsis thaliana (Mouse-ear cress)).